Reading from the N-terminus, the 266-residue chain is Elongation factor Ts (266 aa).

The involved in Mg(2+) ion dislocation from EF-Tu stretch occupies residues 80–83 (TDFV).

Belongs to the EF-Ts family.

It is found in the cytoplasm. In terms of biological role, associates with the EF-Tu.GDP complex and induces the exchange of GDP to GTP. It remains bound to the aminoacyl-tRNA.EF-Tu.GTP complex up to the GTP hydrolysis stage on the ribosome. The sequence is that of Elongation factor Ts from Buchnera aphidicola subsp. Baizongia pistaciae (strain Bp).